Here is a 352-residue protein sequence, read N- to C-terminus: Chorismate synthase (352 aa).

NADP(+)-binding residues include R48 and R54. FMN is bound by residues 125 to 127 (RSS), 238 to 239 (NA), G278, 293 to 297 (KPTSS), and R319.

Belongs to the chorismate synthase family. In terms of assembly, homotetramer. It depends on FMNH2 as a cofactor.

The catalysed reaction is 5-O-(1-carboxyvinyl)-3-phosphoshikimate = chorismate + phosphate. It functions in the pathway metabolic intermediate biosynthesis; chorismate biosynthesis; chorismate from D-erythrose 4-phosphate and phosphoenolpyruvate: step 7/7. Catalyzes the anti-1,4-elimination of the C-3 phosphate and the C-6 proR hydrogen from 5-enolpyruvylshikimate-3-phosphate (EPSP) to yield chorismate, which is the branch point compound that serves as the starting substrate for the three terminal pathways of aromatic amino acid biosynthesis. This reaction introduces a second double bond into the aromatic ring system. The chain is Chorismate synthase from Bordetella petrii (strain ATCC BAA-461 / DSM 12804 / CCUG 43448).